The following is a 225-amino-acid chain: Tryptophan synthase beta chain (225 aa).

Belongs to the TrpB family. As to quaternary structure, tetramer of two alpha and two beta chains. Pyridoxal 5'-phosphate serves as cofactor.

The enzyme catalyses (1S,2R)-1-C-(indol-3-yl)glycerol 3-phosphate + L-serine = D-glyceraldehyde 3-phosphate + L-tryptophan + H2O. The protein operates within amino-acid biosynthesis; L-tryptophan biosynthesis; L-tryptophan from chorismate: step 5/5. Its function is as follows. The beta subunit is responsible for the synthesis of L-tryptophan from indole and L-serine. In Buchnera aphidicola subsp. Rhopalosiphum padi, this protein is Tryptophan synthase beta chain (trpB).